Here is a 341-residue protein sequence, read N- to C-terminus: Ketol-acid reductoisomerase (NADP(+)) (341 aa).

The region spanning 1–182 is the KARI N-terminal Rossmann domain; sequence MTEMFYDDDA…GGTRAGVIKT (182 aa). Residues 25–28, K48, S51, S53, and 83–86 contribute to the NADP(+) site; these read YGSQ and DQHQ. H108 is an active-site residue. G134 lines the NADP(+) pocket. Residues 183–328 form the KARI C-terminal knotted domain; sequence TFTEETETDL…RELRGLFSWQ (146 aa). Residues D191, E195, E227, and E231 each contribute to the Mg(2+) site. S252 provides a ligand contact to substrate.

This sequence belongs to the ketol-acid reductoisomerase family. It depends on Mg(2+) as a cofactor.

The enzyme catalyses (2R)-2,3-dihydroxy-3-methylbutanoate + NADP(+) = (2S)-2-acetolactate + NADPH + H(+). It carries out the reaction (2R,3R)-2,3-dihydroxy-3-methylpentanoate + NADP(+) = (S)-2-ethyl-2-hydroxy-3-oxobutanoate + NADPH + H(+). The protein operates within amino-acid biosynthesis; L-isoleucine biosynthesis; L-isoleucine from 2-oxobutanoate: step 2/4. Its pathway is amino-acid biosynthesis; L-valine biosynthesis; L-valine from pyruvate: step 2/4. In terms of biological role, involved in the biosynthesis of branched-chain amino acids (BCAA). Catalyzes an alkyl-migration followed by a ketol-acid reduction of (S)-2-acetolactate (S2AL) to yield (R)-2,3-dihydroxy-isovalerate. In the isomerase reaction, S2AL is rearranged via a Mg-dependent methyl migration to produce 3-hydroxy-3-methyl-2-ketobutyrate (HMKB). In the reductase reaction, this 2-ketoacid undergoes a metal-dependent reduction by NADPH to yield (R)-2,3-dihydroxy-isovalerate. This is Ketol-acid reductoisomerase (NADP(+)) from Arthrobacter sp. (strain FB24).